A 410-amino-acid chain; its full sequence is Peptidase T (410 aa).

H79 provides a ligand contact to Zn(2+). D81 is an active-site residue. Zn(2+) is bound at residue D142. The Proton acceptor role is filled by E176. Positions 177, 199, and 381 each coordinate Zn(2+).

It belongs to the peptidase M20B family. Requires Zn(2+) as cofactor.

The protein resides in the cytoplasm. It catalyses the reaction Release of the N-terminal residue from a tripeptide.. Its function is as follows. Cleaves the N-terminal amino acid of tripeptides. The chain is Peptidase T from Listeria monocytogenes serotype 4b (strain CLIP80459).